The following is a 166-amino-acid chain: Podoplanin (166 aa).

The first 22 residues, 1-22, serve as a signal peptide directing secretion; the sequence is MWTAPVLLWVLGSVWFWDSAQG. Residues 23–135 lie on the Extracellular side of the membrane; it reads GAIGALEDDL…KKDGLAVVTL (113 aa). Thr34, Thr52, Thr55, and Thr56 each carry an O-linked (GalNAc...) threonine glycan. A compositionally biased stretch (basic and acidic residues) spans 54–63; it reads DTTGELDKST. The disordered stretch occupies residues 54–124; sequence DTTGELDKST…DNAGGETQTT (71 aa). Ser62 carries an O-linked (GalNAc...) serine glycan. Residues Thr63, Thr71, and Thr80 are each glycosylated (O-linked (GalNAc...) threonine). A glycan (O-linked (GalNAc...) serine) is linked at Ser81. An O-linked (GalNAc...) threonine glycan is attached at Thr83. Residue Ser84 is glycosylated (O-linked (GalNAc...) serine). Positions 84 to 93 are enriched in basic and acidic residues; that stretch reads SDHDHKEHES. 7 O-linked (GalNAc...) threonine glycosylation sites follow: Thr94, Thr95, Thr96, Thr101, Thr105, Thr109, and Thr110. Polar residues predominate over residues 94–103; the sequence is TTTVKAVTSH. Basic and acidic residues predominate over residues 104-114; the sequence is STDKKTTHPNR. The chain crosses the membrane as a helical span at residues 136-156; the sequence is VGIIIGVLLAIGFIGGIIIVV. Residues 137–141 are requires for dimerization and lipid rafts association; it reads GIIIG. Residues 157-166 are Cytoplasmic-facing; that stretch reads MRKISGRFSP. Residues 158–159 form a requires for interaction with MSN and EZR region; it reads RK.

It belongs to the podoplanin family. As to quaternary structure, homodimer. Interacts with CLEC1B; the interaction is independent of CLEC1B glycosylation and activates CLEC1B; the interaction is dependent of sialic acid on O-glycans. Interacts with CD9; this interaction is homophilic and attenuates platelet aggregation and pulmonary metastasis induced by PDPN. Interacts with LGALS8; the interaction is glycosylation-dependent; may participate in connection of the lymphatic endothelium to the surrounding extracellular matrix. Interacts with HSPA9. Interacts (via extracellular domain) with CD44; this interaction is required for PDPN-mediated directional migration and regulation of lamellipodia extension/stabilization during cell spreading and migration. Interacts (via cytoplasmic domain) with MSN and EZR; activates RHOA and promotes epithelial-mesenchymal transition. Interacts with CCL21; relocalized PDPN to the basolateral membrane. Post-translationally, extensively O-glycosylated. Contains sialic acid residues. O-glycosylation is necessary for platelet aggregation activity. Disialylated at Thr-52; sialic acid is critical for platelet-aggregating activity and for CLEC1B interaction. In terms of processing, the N-terminus is blocked. As to expression, in adult kidney, expressed on the urinary surface and foot processes of podocytes and in parietal epithelial cells of Bowman's capsule where it is localized to luminal surfaces. In lung, expressed exclusively on luminal surfaces of type I alveolar epithelial cells and pleural mesothelial cells. Not expressed in type II alveolar cells. In bone, expressed in osteocytes and osteoblasts. In spleen, liver, stomach and intestine, expressed in mesoepithelium. Also expressed in thymic epithelial cells, choroid plexus and leptomeninges.

It localises to the membrane. Its subcellular location is the cell projection. The protein localises to the lamellipodium membrane. The protein resides in the filopodium membrane. It is found in the microvillus membrane. It localises to the ruffle membrane. Its subcellular location is the membrane raft. The protein localises to the apical cell membrane. The protein resides in the basolateral cell membrane. It is found in the invadopodium. Functionally, mediates effects on cell migration and adhesion through its different partners. During development plays a role in blood and lymphatic vessels separation by binding CLEC1B, triggering CLEC1B activation in platelets and leading to platelet activation and/or aggregation. Interaction with CD9, on the contrary, attenuates platelet aggregation and pulmonary metastasis induced by PDPN. Mediates effects on cell migration and adhesion through its different partners. Through MSN or EZR interaction promotes epithelial-mesenchymal transition (EMT) leading to ERZ phosphorylation and triggering RHOA activation leading to cell migration increase and invasiveness. Interaction with CD44 promotes directional cell migration in epithelial and tumor cells. In lymph nodes (LNs), controls fibroblastic reticular cells (FRCs) adhesion to the extracellular matrix (ECM) and contraction of the actomyosin by maintaining ERM proteins (EZR; MSN and RDX) and MYL9 activation through association with unknown transmembrane proteins. Engagement of CLEC1B by PDPN promotes FRCs relaxation by blocking lateral membrane interactions leading to reduction of ERM proteins (EZR; MSN and RDX) and MYL9 activation. Through binding with LGALS8 may participate in connection of the lymphatic endothelium to the surrounding extracellular matrix. In keratinocytes, induces changes in cell morphology showing an elongated shape, numerous membrane protrusions, major reorganization of the actin cytoskeleton, increased motility and decreased cell adhesion. Controls invadopodia stability and maturation leading to efficient degradation of the extracellular matrix (ECM) in tumor cells through modulation of RHOC activity in order to activate ROCK1/ROCK2 and LIMK1/LIMK2 and inactivation of CFL1. Required for normal lung cell proliferation and alveolus formation at birth. Does not function as a water channel or as a regulator of aquaporin-type water channels. Does not have any effect on folic acid or amino acid transport. The sequence is that of Podoplanin from Rattus norvegicus (Rat).